The sequence spans 99 residues: Transcriptional repressor PagR (99 aa).

In terms of domain architecture, HTH arsR-type spans 9–99; sequence IEYMSLEDDA…GIIKLLNPIQ (91 aa). The segment at residues 43 to 62 is a DNA-binding region (H-T-H motif); that stretch reads NVTQIIQILKLPQSTVSQHL.

Represses the expression of the pagA and atxA genes. This chain is Transcriptional repressor PagR (pagR), found in Bacillus anthracis.